A 396-amino-acid polypeptide reads, in one-letter code: Ribosomal RNA large subunit methyltransferase I (396 aa).

Residues 2–79 form the PUA domain; the sequence is TSAVYLQAGR…EKEVIDQHFF (78 aa).

Belongs to the methyltransferase superfamily. RlmI family.

The protein resides in the cytoplasm. It catalyses the reaction cytidine(1962) in 23S rRNA + S-adenosyl-L-methionine = 5-methylcytidine(1962) in 23S rRNA + S-adenosyl-L-homocysteine + H(+). Its function is as follows. Specifically methylates the cytosine at position 1962 (m5C1962) of 23S rRNA. The sequence is that of Ribosomal RNA large subunit methyltransferase I from Pseudoalteromonas translucida (strain TAC 125).